Consider the following 808-residue polypeptide: Piwi-like protein 1 (808 aa).

The 120-residue stretch at 214–333 (RINRVLNENN…IPGELCYLCG (120 aa)) folds into the PAZ domain. Residues 300 to 322 (SMVRPKEKTENEPEGPTETDQSL) are disordered. Positions 492–790 (HMALVFIPDD…LAELVGKIHR (299 aa)) constitute a Piwi domain.

This sequence belongs to the argonaute family. Piwi subfamily. Expressed in dividing adult somatic stem cells (neoblasts).

The polypeptide is Piwi-like protein 1 (wi-1) (Schmidtea mediterranea (Freshwater planarian flatworm)).